The primary structure comprises 459 residues: Vanillin aminotransferase (459 aa).

Pyridoxal 5'-phosphate-binding positions include 115–116 (GS) and aspartate 255. Lysine 284 is modified (N6-(pyridoxal phosphate)lysine). Position 320–321 (320–321 (FT)) interacts with pyridoxal 5'-phosphate. Residues 428 to 459 (LSLEELDELIRIYGKALKDTEKRVEELKSQKK) adopt a coiled-coil conformation.

The protein belongs to the class-III pyridoxal-phosphate-dependent aminotransferase family. Expressed in placental tissue of immature fruit.

The catalysed reaction is vanillin + L-alanine = vanillylamine + pyruvate. It functions in the pathway aromatic compound metabolism; phenylpropanoid biosynthesis. Involved in the biosynthesis of capsaicinoids natural products, pungent alkaloids synthesized from phenylpropanoid intermediates in the placental tissue of chili pepper fruit acting as repellant on herbivorous mammals and conferring spiciness to hot peppers. Can transfer an amine from vanillylamine to pyruvate forming vanillin and L-alanine. Can use pyruvate or oxaloacetate, but not 2-oxoglutarate as amino group acceptors. Is able to convert (S)-1-phenylethylamine into acetophenone in vitro. The chain is Vanillin aminotransferase from Capsicum chinense (Scotch bonnet).